Here is a 275-residue protein sequence, read N- to C-terminus: Adenylate kinase (275 aa).

Residue 54 to 59 (GAGKGT) coordinates ATP. The interval 74-103 (ATGDMLRSQVAKKTPLGREAKKIMDQGGLV) is NMP. AMP is bound by residues threonine 75, arginine 80, 101-103 (GLV), 130-133 (GFPR), and glutamine 137. The segment at 171 to 208 (GRLVHPASGRSYHRVFNPPKAEMKDDITGEPLVSRSDD) is LID. ATP is bound by residues arginine 172 and 181 to 182 (SY). The AMP site is built by arginine 205 and arginine 216. Residue glutamine 244 coordinates ATP.

The protein belongs to the adenylate kinase family. AK2 subfamily. As to quaternary structure, monomer.

It is found in the cytoplasm. It localises to the cytosol. The protein resides in the mitochondrion intermembrane space. The enzyme catalyses AMP + ATP = 2 ADP. Its function is as follows. Catalyzes the reversible transfer of the terminal phosphate group between ATP and AMP. Plays an important role in cellular energy homeostasis and in adenine nucleotide metabolism. Adenylate kinase activity is critical for regulation of the phosphate utilization and the AMP de novo biosynthesis pathways. The protein is Adenylate kinase (adk1) of Sclerotinia sclerotiorum (strain ATCC 18683 / 1980 / Ss-1) (White mold).